The following is a 730-amino-acid chain: Catalase R (730 aa).

His105 is a catalytic residue. Tyr392 contributes to the heme binding site. The segment at 403-433 is disordered; sequence PNFEQIPVNRPRKPVHNNNRDGFGQQQIPTN.

Belongs to the catalase family. Requires heme as cofactor.

It catalyses the reaction 2 H2O2 = O2 + 2 H2O. Its function is as follows. Occurs in almost all aerobically respiring organisms and serves to protect cells from the toxic effects of hydrogen peroxide. The sequence is that of Catalase R (catR) from Aspergillus niger.